Consider the following 287-residue polypeptide: Probable endonuclease 4 (287 aa).

Residues His-69, His-109, Glu-144, Asp-178, His-181, His-215, Asp-228, His-230, and Glu-260 each contribute to the Zn(2+) site.

It belongs to the AP endonuclease 2 family. Zn(2+) serves as cofactor.

The enzyme catalyses Endonucleolytic cleavage to 5'-phosphooligonucleotide end-products.. In terms of biological role, endonuclease IV plays a role in DNA repair. It cleaves phosphodiester bonds at apurinic or apyrimidinic (AP) sites, generating a 3'-hydroxyl group and a 5'-terminal sugar phosphate. The protein is Probable endonuclease 4 of Thermotoga maritima (strain ATCC 43589 / DSM 3109 / JCM 10099 / NBRC 100826 / MSB8).